Consider the following 363-residue polypeptide: NAD(P)H-quinone oxidoreductase subunit 1, chloroplastic (363 aa).

The next 7 membrane-spanning stretches (helical) occupy residues 30–50 (FIPI…IVWL), 104–124 (IAVI…HLVL), 129–149 (IGVF…LMSG), 248–268 (YSGI…LVSS), 269–289 (LFVT…IFVF), 300–320 (VFEP…FLFI), and 336–356 (LLNL…LLTT).

It belongs to the complex I subunit 1 family. In terms of assembly, NDH is composed of at least 16 different subunits, 5 of which are encoded in the nucleus.

The protein resides in the plastid. The protein localises to the chloroplast thylakoid membrane. The enzyme catalyses a plastoquinone + NADH + (n+1) H(+)(in) = a plastoquinol + NAD(+) + n H(+)(out). The catalysed reaction is a plastoquinone + NADPH + (n+1) H(+)(in) = a plastoquinol + NADP(+) + n H(+)(out). Its function is as follows. NDH shuttles electrons from NAD(P)H:plastoquinone, via FMN and iron-sulfur (Fe-S) centers, to quinones in the photosynthetic chain and possibly in a chloroplast respiratory chain. The immediate electron acceptor for the enzyme in this species is believed to be plastoquinone. Couples the redox reaction to proton translocation, and thus conserves the redox energy in a proton gradient. The sequence is that of NAD(P)H-quinone oxidoreductase subunit 1, chloroplastic from Morus indica (Mulberry).